The primary structure comprises 162 residues: Regulator of sigma D (162 aa).

This sequence belongs to the Rsd/AlgQ family. As to quaternary structure, interacts with RpoD.

The protein resides in the cytoplasm. Functionally, binds RpoD and negatively regulates RpoD-mediated transcription activation by preventing the interaction between the primary sigma factor RpoD with the catalytic core of the RNA polymerase and with promoter DNA. May be involved in replacement of the RNA polymerase sigma subunit from RpoD to RpoS during the transition from exponential growth to the stationary phase. This is Regulator of sigma D from Salmonella choleraesuis (strain SC-B67).